The sequence spans 633 residues: Chaperone protein HtpG (633 aa).

Positions 1 to 345 (MSADTQSETL…SDDLPLNISR (345 aa)) are a; substrate-binding. Positions 346–562 (EMLQHNPMIS…EYDFGMGMQR (217 aa)) are b. A c region spans residues 563-633 (LLQAAGHQLP…VRRVNNLLAG (71 aa)).

Belongs to the heat shock protein 90 family. Homodimer.

Its subcellular location is the cytoplasm. Its function is as follows. Molecular chaperone. Has ATPase activity. The chain is Chaperone protein HtpG from Halorhodospira halophila (strain DSM 244 / SL1) (Ectothiorhodospira halophila (strain DSM 244 / SL1)).